The sequence spans 233 residues: Orotidine 5'-phosphate decarboxylase (233 aa).

Residues aspartate 9, lysine 31, 58-67, threonine 120, arginine 182, glutamine 191, glycine 211, and arginine 212 contribute to the substrate site; that span reads DLKLHDIPNT. Lysine 60 (proton donor) is an active-site residue.

It belongs to the OMP decarboxylase family. Type 1 subfamily. In terms of assembly, homodimer.

It carries out the reaction orotidine 5'-phosphate + H(+) = UMP + CO2. The protein operates within pyrimidine metabolism; UMP biosynthesis via de novo pathway; UMP from orotate: step 2/2. Its function is as follows. Catalyzes the decarboxylation of orotidine 5'-monophosphate (OMP) to uridine 5'-monophosphate (UMP). The protein is Orotidine 5'-phosphate decarboxylase of Listeria monocytogenes serotype 4a (strain HCC23).